The following is a 596-amino-acid chain: Trehalase (596 aa).

The signal sequence occupies residues 1 to 23 (MFKLPTISLLLVSWSCLVALSQA). Substrate contacts are provided by residues R193, 200 to 201 (WD), N237, and 246 to 248 (RSQ). 2 N-linked (GlcNAc...) asparagine glycosylation sites follow: N288 and N293. The tract at residues 303–323 (SSGPRPESYREDVETGEEFPT) is disordered. Residues 307-309 (RPE) and G341 each bind substrate. D343 serves as the catalytic Proton donor/acceptor. N-linked (GlcNAc...) asparagine glycans are attached at residues N359, N451, and N516. Residue E541 is the Proton donor/acceptor of the active site. E556 lines the substrate pocket.

It belongs to the glycosyl hydrolase 37 family. In the adult brain predominantly expressed in glial cells (at protein level).

The catalysed reaction is alpha,alpha-trehalose + H2O = alpha-D-glucose + beta-D-glucose. In terms of biological role, enzyme that cleaves trehalose to produce 2 glucose molecules that can be used by the glycolytic pathway. Glycolysis is essential in glial cells but not in neurons; neurons rely on the citric acid cycle for their energy needs, and on lactate and alanine secreted into the hemolymph by glial cells to fuel it. This is Trehalase from Drosophila melanogaster (Fruit fly).